Reading from the N-terminus, the 254-residue chain is Phosphoribosylaminoimidazole-succinocarboxamide synthase (254 aa).

This sequence belongs to the SAICAR synthetase family.

It carries out the reaction 5-amino-1-(5-phospho-D-ribosyl)imidazole-4-carboxylate + L-aspartate + ATP = (2S)-2-[5-amino-1-(5-phospho-beta-D-ribosyl)imidazole-4-carboxamido]succinate + ADP + phosphate + 2 H(+). It functions in the pathway purine metabolism; IMP biosynthesis via de novo pathway; 5-amino-1-(5-phospho-D-ribosyl)imidazole-4-carboxamide from 5-amino-1-(5-phospho-D-ribosyl)imidazole-4-carboxylate: step 1/2. In Gluconobacter oxydans (strain 621H) (Gluconobacter suboxydans), this protein is Phosphoribosylaminoimidazole-succinocarboxamide synthase.